The sequence spans 220 residues: Antistasin (220 aa).

The first 19 residues, Met1 to Ala19, serve as a signal peptide directing secretion. Antistasin-like domains lie at Cys21 to Cys46, Cys54 to Cys79, Cys91 to Cys117, Cys120 to Cys145, Cys154 to Cys180, and Cys183 to Cys208.

This sequence belongs to the protease inhibitor I15 (antistasin) family. As to expression, gland cells. It is more strongly expressed in the head than in the gastric tissue.

Its subcellular location is the secreted. In terms of biological role, this highly disulfide-bonded protein is a potent inhibitor of factor Xa. Facilitates digestion of tissues and may also protect the gastric tissues from its own digestive enzymes. May have therapeutic utility as an anticoagulant. Also exhibits a strong metastatic activity. This Hydra vulgaris (Hydra) protein is Antistasin.